The sequence spans 624 residues: Chaperone protein DnaK (624 aa).

T174 bears the Phosphothreonine; by autocatalysis mark. Disordered stretches follow at residues 544-563 (KKAQ…DDLS) and 576-624 (NAQK…DDKK). Residues 581 to 600 (QQAQGGPASGAATDAGAAQG) show a composition bias toward low complexity. Basic and acidic residues predominate over residues 601-624 (SDDKKSDDDTINGDYKDVSDDDKK).

It belongs to the heat shock protein 70 family.

Acts as a chaperone. The polypeptide is Chaperone protein DnaK (Lacticaseibacillus casei (strain BL23) (Lactobacillus casei)).